The primary structure comprises 329 residues: DNA-directed RNA polymerase subunit alpha (329 aa).

The tract at residues 1–231 (MQTNLLKPKT…EQLAVFAQLE (231 aa)) is alpha N-terminal domain (alpha-NTD). The tract at residues 249-329 (FDPILLRPVD…SWPPAGLDKR (81 aa)) is alpha C-terminal domain (alpha-CTD).

Belongs to the RNA polymerase alpha chain family. Homodimer. The RNAP catalytic core consists of 2 alpha, 1 beta, 1 beta' and 1 omega subunit. When a sigma factor is associated with the core the holoenzyme is formed, which can initiate transcription.

The enzyme catalyses RNA(n) + a ribonucleoside 5'-triphosphate = RNA(n+1) + diphosphate. In terms of biological role, DNA-dependent RNA polymerase catalyzes the transcription of DNA into RNA using the four ribonucleoside triphosphates as substrates. The sequence is that of DNA-directed RNA polymerase subunit alpha from Polaromonas sp. (strain JS666 / ATCC BAA-500).